Here is a 2207-residue protein sequence, read N- to C-terminus: Desmoplakin-B (2207 aa).

Coiled-coil stretches lie at residues M506–K916, A952–R1000, and T1029–N1063. Over residues K905–L924 the composition is skewed to basic and acidic residues. Residues K905–E933 are disordered. Plectin repeat units lie at residues L1369–Q1406, L1407–L1445, L1446–L1483, Y1571–L1609, L1610–L1647, L1685–L1723, I1783–L1811, L1992–R2029, and F2068–L2106. Positions I2155 to P2164 are enriched in polar residues. Positions I2155–S2207 are disordered. Over residues G2165 to S2207 the composition is skewed to low complexity.

It belongs to the plakin or cytolinker family.

The protein resides in the cell junction. Its subcellular location is the desmosome. It is found in the cell membrane. Its function is as follows. Involved in the organization of desmosome cell-cell junctions. Of particular importance in cell adhesion in the skin and during cardiac development. May also play a role in the regulation of Wnt, TGF-beta and Hippo signaling pathways. This is Desmoplakin-B from Danio rerio (Zebrafish).